Reading from the N-terminus, the 886-residue chain is DNA double-strand break repair Rad50 ATPase (886 aa).

ATP contacts are provided by residues 32–38 (NGAGKSS) and Q137. Coiled coils occupy residues 181–240 (IRSL…KEIK) and 320–416 (RKKE…GDLN). In terms of domain architecture, Zinc-hook spans 391–489 (IKDVSDRINQ…EREELEATRN (99 aa)). Zn(2+) is bound by residues C437 and C440. 2 coiled-coil regions span residues 450-657 (AKIR…ISEL) and 682-718 (EADK…EESK).

It belongs to the SMC family. RAD50 subfamily. In terms of assembly, homodimer. Forms a heterotetramer composed of two Mre11 subunits and two Rad50 subunits. Interacts with Mre11 and HerA. Requires Zn(2+) as cofactor.

In terms of biological role, part of the Rad50/Mre11 complex, which is involved in the early steps of DNA double-strand break (DSB) repair. The complex may facilitate opening of the processed DNA ends to aid in the recruitment of HerA and NurA. Rad50 controls the balance between DNA end bridging and DNA resection via ATP-dependent structural rearrangements of the Rad50/Mre11 complex. This is DNA double-strand break repair Rad50 ATPase from Sulfolobus acidocaldarius (strain ATCC 33909 / DSM 639 / JCM 8929 / NBRC 15157 / NCIMB 11770).